The sequence spans 512 residues: Kelch repeat protein C2 (512 aa).

Positions 2 to 67 constitute a BTB domain; sequence ESVIFSINGE…IRWKKINITI (66 aa). Kelch repeat units lie at residues 216–261, 262–307, 309–354, 356–403, 405–449, and 452–498; these read IKHN…LHNC, LYII…VNNG, LYVI…FVND, IYVM…EYDG, IYVI…SCGD, and LIIA…THKS.

Belongs to the poxviruses Kelch family.

This is Kelch repeat protein C2 from Homo sapiens (Human).